Consider the following 1129-residue polypeptide: Tyrosine-protein kinase JAK2 (1129 aa).

Residues 35 to 378 form the FERM domain; that stretch reads PLLQVYLYYS…GYYRLTADAH (344 aa). Position 117 is a phosphotyrosine; by autocatalysis (Tyr-117). The 82-residue stretch at 399-480 folds into the SH2; atypical domain; the sequence is HGPIFMDFAI…NLKDLLTCYQ (82 aa). Protein kinase domains lie at 542–806 and 846–1118; these read LIFE…NSLF and LKFL…DLAQ. An ATP-binding site is contributed by 852-860; that stretch reads LGKGNFGSV. Phosphotyrosine; by autocatalysis is present on Tyr-865. Position 879 (Lys-879) interacts with ATP. A phosphotyrosine; by autocatalysis mark is found at Tyr-963 and Tyr-969. Catalysis depends on Asp-973, which acts as the Proton acceptor. Tyr-1004 and Tyr-1005 each carry phosphotyrosine; by autocatalysis.

It belongs to the protein kinase superfamily. Tyr protein kinase family. JAK subfamily. In terms of processing, autophosphorylated, leading to regulate its activity.

It is found in the endomembrane system. It localises to the nucleus. The catalysed reaction is L-tyrosyl-[protein] + ATP = O-phospho-L-tyrosyl-[protein] + ADP + H(+). Regulated by autophosphorylation, can both activate or decrease activity. Heme regulates its activity by enhancing the phosphorylation on Tyr-1004 and Tyr-1005. Functionally, non-receptor tyrosine kinase involved in various processes such as cell growth, development, differentiation or histone modifications. Mediates essential signaling events in both innate and adaptive immunity. In the cytoplasm, plays a pivotal role in signal transduction via its association with cytokine receptors. Following ligand-binding to cell surface receptors, phosphorylates specific tyrosine residues on the cytoplasmic tails of the receptor, creating docking sites for STATs proteins. Subsequently, phosphorylates the STATs proteins once they are recruited to the receptor. Phosphorylated STATs then form homodimer or heterodimers and translocate to the nucleus to activate gene transcription. For example, cell stimulation with erythropoietin (EPO) during erythropoiesis leads to JAK2 autophosphorylation, activation, and its association with erythropoietin receptor (EPOR) that becomes phosphorylated in its cytoplasmic domain. Then, STAT5 (STAT5A or STAT5B) is recruited, phosphorylated and activated by JAK2. Once activated, dimerized STAT5 translocates into the nucleus and promotes the transcription of several essential genes involved in the modulation of erythropoiesis. Part of a signaling cascade that is activated by increased cellular retinol and that leads to the activation of STAT5 (STAT5A or STAT5B). In the nucleus, plays a key role in chromatin by specifically mediating phosphorylation of 'Tyr-41' of histone H3 (H3Y41ph), a specific tag that promotes exclusion of CBX5 (HP1 alpha) from chromatin. Up-regulates the potassium voltage-gated channel activity of KCNA3. The polypeptide is Tyrosine-protein kinase JAK2 (Gallus gallus (Chicken)).